Here is a 1318-residue protein sequence, read N- to C-terminus: Uromodulin-like 1 (1318 aa).

The first 21 residues, Met1 to Ala21, serve as a signal peptide directing secretion. Residues Ser22–Tyr1272 are Extracellular-facing. An EMI domain is found at Gly33–Leu106. 3 cysteine pairs are disulfide-bonded: Cys37-Cys94, Cys61-Cys70, and Cys93-Cys104. Asn89 is a glycosylation site (N-linked (GlcNAc...) asparagine). A glycan (N-linked (GlcNAc...) asparagine) is linked at Asn109. In terms of domain architecture, WAP spans Phe114–Ala158. The N-linked (GlcNAc...) asparagine glycan is linked to Asn172. The 50-residue stretch at Asp264–Pro313 folds into the EGF-like 1; calcium-binding domain. Residues Pro314–Gln398 enclose the Fibronectin type-III 1 domain. N-linked (GlcNAc...) asparagine glycans are attached at residues Asn322, Asn335, and Asn417. In terms of domain architecture, SEA 1 spans Asn396–Glu510. Positions Asp507 to Glu552 constitute an EGF-like 2; calcium-binding domain. Disulfide bonds link Cys511-Cys525, Cys519-Cys534, and Cys536-Cys551. Asn585 carries N-linked (GlcNAc...) asparagine glycosylation. Residues Gly593–His655 form a disordered region. The region spanning Val702–Lys791 is the Fibronectin type-III 2 domain. A glycan (N-linked (GlcNAc...) asparagine) is linked at Asn713. Residues Ala788–Glu900 form the SEA 2 domain. The EGF-like 3; calcium-binding domain occupies Asp897–Glu938. Cystine bridges form between Cys901–Cys914 and Cys908–Cys923. Residues Glu938–Arg957 form a disordered region. Residues Asn984 and Asn1050 are each glycosylated (N-linked (GlcNAc...) asparagine). Positions Leu992–Phe1235 constitute a ZP domain. Cys1157 and Cys1215 form a disulfide bridge. Residues Val1273–Val1293 traverse the membrane as a helical segment. Residues Arg1294–Glu1318 are Cytoplasmic-facing.

Isoform 4 is expressed at low level in kidney, testis and fetal thymus. Isoform 3 is expressed at low level in prostate, testis and fetal thymus.

It localises to the cell membrane. It is found in the cytoplasm. The protein is Uromodulin-like 1 (UMODL1) of Homo sapiens (Human).